A 1127-amino-acid polypeptide reads, in one-letter code: Collagen alpha-2(I) chain (1127 aa).

Residues 1-16 are compositionally biased toward pro residues; the sequence is DGKPGLPGPAGPPGPP. The disordered stretch occupies residues 1–1017; that stretch reads DGKPGLPGPA…GPAGPAGGGY (1017 aa). Composition is skewed to low complexity over residues 171–191, 221–230, and 237–258; these read AGPA…AAGP, EPGPNGAVGP, and PGNN…AGAP. Residues 260–270 show a composition bias toward pro residues; that stretch reads FPGPRGGPGPQ. The span at 272–282 shows a compositional bias: low complexity; it reads PQGAAGQRGLA. A compositionally biased stretch (gly residues) spans 289-298; sequence GVKGDGGPKG. Composition is skewed to low complexity over residues 326-345, 355-398, 436-449, and 461-473; these read ATGP…RGMP, AAGP…AGPA, APGP…TGAT, and QGAA…QGLP. Residues 474-483 are compositionally biased toward gly residues; sequence GPAGGAGEAG. Residues 508-518 show a composition bias toward low complexity; that stretch reads NPGAAGASGPQ. A compositionally biased stretch (gly residues) spans 531–568; sequence GTDGGKGEPGAAGAAGGPGHQGPGGMPGERGAAGGPGG. Residues 569 to 580 show a composition bias toward basic and acidic residues; the sequence is KGEKGEAGHRGP. Composition is skewed to low complexity over residues 611-625 and 634-647; these read SGSF…ARGA and PAGA…PGAD. A compositionally biased stretch (gly residues) spans 657–666; sequence GPSGGKGESG. Low complexity-rich tracts occupy residues 667-692, 703-730, and 758-778; these read PSGP…TGAR, FPGA…PAGK, and SGEK…PLGL. Residues 792–801 are compositionally biased toward gly residues; that stretch reads GSPGGAGAVG. 2 stretches are compositionally biased toward low complexity: residues 802-824 and 860-872; these read EAGR…LGLP and PGSS…AGAP. Residues 876–897 show a composition bias toward gly residues; it reads GPSGGAGRPGNRGESGPGGAAG. Positions 898-913 are enriched in low complexity; sequence AVGPAGARGAAGPSGP. Residues 914–928 show a composition bias toward basic and acidic residues; the sequence is RGEKGVAGEKGERGM. Composition is skewed to low complexity over residues 937–956 and 986–997; these read LQGM…AGPN and PGARGPPGYVGP. Pro residues predominate over residues 998 to 1010; the sequence is AGPPGXPGLPGPA. A Fibrillar collagen NC1 domain is found at 1093–1127; that stretch reads RTNKPSRLPLLDLAPLDLGGADQEFGLDLGPVCFK.

This sequence belongs to the fibrillar collagen family.

It localises to the secreted. It is found in the extracellular space. The protein localises to the extracellular matrix. In Epinephelus marginatus (Dusky grouper), this protein is Collagen alpha-2(I) chain.